The sequence spans 492 residues: Propanoyl-CoA:succinate CoA transferase (492 aa).

Position 260–264 (260–264 (GVGNI)) interacts with CoA. Catalysis depends on Glu-286, which acts as the 5-glutamyl coenzyme A thioester intermediate. Positions 376 and 380 each coordinate CoA.

The protein belongs to the acetyl-CoA hydrolase/transferase family.

The catalysed reaction is propanoyl-CoA + succinate = propanoate + succinyl-CoA. In terms of biological role, catalyzes the transfer of coenzyme A from propionyl-CoA to succinate. Could be part of a pathway that converts succinate to propionate. In Escherichia coli (strain K12), this protein is Propanoyl-CoA:succinate CoA transferase.